The following is a 453-amino-acid chain: UDP-N-acetylmuramoylalanine--D-glutamate ligase (453 aa).

Residue 115-121 (GTNGKTT) participates in ATP binding.

It belongs to the MurCDEF family.

The protein resides in the cytoplasm. The enzyme catalyses UDP-N-acetyl-alpha-D-muramoyl-L-alanine + D-glutamate + ATP = UDP-N-acetyl-alpha-D-muramoyl-L-alanyl-D-glutamate + ADP + phosphate + H(+). It participates in cell wall biogenesis; peptidoglycan biosynthesis. Functionally, cell wall formation. Catalyzes the addition of glutamate to the nucleotide precursor UDP-N-acetylmuramoyl-L-alanine (UMA). The protein is UDP-N-acetylmuramoylalanine--D-glutamate ligase of Geotalea uraniireducens (strain Rf4) (Geobacter uraniireducens).